We begin with the raw amino-acid sequence, 425 residues long: Serine--tRNA ligase (425 aa).

Residue 231 to 233 participates in L-serine binding; it reads TAE. ATP is bound at residue 262–264; the sequence is RSE. Glu285 serves as a coordination point for L-serine. Residue 349 to 352 coordinates ATP; sequence EISS. Position 385 (Ser385) interacts with L-serine.

This sequence belongs to the class-II aminoacyl-tRNA synthetase family. Type-1 seryl-tRNA synthetase subfamily. As to quaternary structure, homodimer. The tRNA molecule binds across the dimer.

It localises to the cytoplasm. It carries out the reaction tRNA(Ser) + L-serine + ATP = L-seryl-tRNA(Ser) + AMP + diphosphate + H(+). It catalyses the reaction tRNA(Sec) + L-serine + ATP = L-seryl-tRNA(Sec) + AMP + diphosphate + H(+). It functions in the pathway aminoacyl-tRNA biosynthesis; selenocysteinyl-tRNA(Sec) biosynthesis; L-seryl-tRNA(Sec) from L-serine and tRNA(Sec): step 1/1. In terms of biological role, catalyzes the attachment of serine to tRNA(Ser). Is also able to aminoacylate tRNA(Sec) with serine, to form the misacylated tRNA L-seryl-tRNA(Sec), which will be further converted into selenocysteinyl-tRNA(Sec). The sequence is that of Serine--tRNA ligase from Exiguobacterium sibiricum (strain DSM 17290 / CCUG 55495 / CIP 109462 / JCM 13490 / 255-15).